A 362-amino-acid chain; its full sequence is Putative lipoprotein YdaJ (362 aa).

The N-terminal stretch at 1-20 is a signal peptide; the sequence is MRHVLIAVILFFLSIGLSAG. Residue Cys-21 is the site of N-palmitoyl cysteine attachment. The S-diacylglycerol cysteine moiety is linked to residue Cys-21.

Its subcellular location is the cell membrane. In Bacillus subtilis (strain 168), this protein is Putative lipoprotein YdaJ (ydaJ).